The primary structure comprises 208 residues: MKIVEVKHPLVKHKLGLMRENDISTKRFRELASEVGSLLTYEATADLATEKVTIDGWCGPVEVDQIKGKKITVVPILRAGLGMMEGVLENVPSARISVVGIYRDEETLEPVPYFQKLVSNIEERMALVVDPMLATGGSMIATIDLLKKAGCHSIKVLVLVAAPEGIAALEKAHPDIELYTASIDKGLNEQGYIMPGLGDAGDKIFGTK.

5-phospho-alpha-D-ribose 1-diphosphate is bound by residues arginine 78, arginine 103, and 130-138 (DPMLATGGS). Uracil is bound by residues isoleucine 193 and 198–200 (GDA). Position 199 (aspartate 199) interacts with 5-phospho-alpha-D-ribose 1-diphosphate.

This sequence belongs to the UPRTase family. Mg(2+) serves as cofactor.

The enzyme catalyses UMP + diphosphate = 5-phospho-alpha-D-ribose 1-diphosphate + uracil. Its pathway is pyrimidine metabolism; UMP biosynthesis via salvage pathway; UMP from uracil: step 1/1. Allosterically activated by GTP. Catalyzes the conversion of uracil and 5-phospho-alpha-D-ribose 1-diphosphate (PRPP) to UMP and diphosphate. The polypeptide is Uracil phosphoribosyltransferase (Pectobacterium carotovorum subsp. carotovorum (strain PC1)).